A 425-amino-acid polypeptide reads, in one-letter code: Serine--tRNA ligase (425 aa).

Position 230–232 (230–232) interacts with L-serine; the sequence is TAE. Residue 261-263 participates in ATP binding; that stretch reads RSE. Residue glutamate 284 coordinates L-serine. An ATP-binding site is contributed by 348 to 351; sequence EISS. Serine 384 provides a ligand contact to L-serine.

It belongs to the class-II aminoacyl-tRNA synthetase family. Type-1 seryl-tRNA synthetase subfamily. In terms of assembly, homodimer. The tRNA molecule binds across the dimer.

It is found in the cytoplasm. The catalysed reaction is tRNA(Ser) + L-serine + ATP = L-seryl-tRNA(Ser) + AMP + diphosphate + H(+). It catalyses the reaction tRNA(Sec) + L-serine + ATP = L-seryl-tRNA(Sec) + AMP + diphosphate + H(+). Its pathway is aminoacyl-tRNA biosynthesis; selenocysteinyl-tRNA(Sec) biosynthesis; L-seryl-tRNA(Sec) from L-serine and tRNA(Sec): step 1/1. Functionally, catalyzes the attachment of serine to tRNA(Ser). Is also able to aminoacylate tRNA(Sec) with serine, to form the misacylated tRNA L-seryl-tRNA(Sec), which will be further converted into selenocysteinyl-tRNA(Sec). This Streptococcus pyogenes serotype M5 (strain Manfredo) protein is Serine--tRNA ligase.